Reading from the N-terminus, the 393-residue chain is Dihydrolipoyllysine-residue succinyltransferase component of 2-oxoglutarate dehydrogenase complex (393 aa).

Residues 3–78 (RINILVPDLP…KSNQILGNIV (76 aa)) enclose the Lipoyl-binding domain. Lysine 44 carries the post-translational modification N6-lipoyllysine. Residues histidine 364 and aspartate 368 contribute to the active site.

This sequence belongs to the 2-oxoacid dehydrogenase family. As to quaternary structure, forms a 24-polypeptide structural core with octahedral symmetry. Part of the 2-oxoglutarate dehydrogenase (OGDH) complex composed of E1 (2-oxoglutarate dehydrogenase), E2 (dihydrolipoamide succinyltransferase) and E3 (dihydrolipoamide dehydrogenase); the complex contains multiple copies of the three enzymatic components (E1, E2 and E3). The cofactor is (R)-lipoate.

The enzyme catalyses N(6)-[(R)-dihydrolipoyl]-L-lysyl-[protein] + succinyl-CoA = N(6)-[(R)-S(8)-succinyldihydrolipoyl]-L-lysyl-[protein] + CoA. Its pathway is amino-acid degradation; L-lysine degradation via saccharopine pathway; glutaryl-CoA from L-lysine: step 6/6. In terms of biological role, E2 component of the 2-oxoglutarate dehydrogenase (OGDH) complex which catalyzes the second step in the conversion of 2-oxoglutarate to succinyl-CoA and CO(2). This is Dihydrolipoyllysine-residue succinyltransferase component of 2-oxoglutarate dehydrogenase complex (sucB) from Buchnera aphidicola subsp. Schizaphis graminum (strain Sg).